The following is a 232-amino-acid chain: U-scoloptoxin(11)-Sa3a (232 aa).

The first 21 residues, 1-21, serve as a signal peptide directing secretion; sequence MFQFCLLILLLAPGRFFSALG.

This sequence belongs to the scoloptoxin-11 family. Post-translationally, contains 8 disulfide bonds. Expressed by the venom gland.

It is found in the secreted. The protein is U-scoloptoxin(11)-Sa3a of Scolopendra alternans (Florida Keys giant centipede).